The chain runs to 336 residues: Ethanol acetyltransferase 1 (336 aa).

Residues 1 to 14 (MFPTRVLRSTLQKL) constitute a mitochondrion transit peptide. Residues 44–296 (PIVFLHGIFG…VNSSHDILDQ (253 aa)) form the AB hydrolase-1 domain. Active-site charge relay system residues include serine 117, aspartate 141, and histidine 291.

This sequence belongs to the AB hydrolase superfamily.

The protein resides in the mitochondrion. It catalyses the reaction ethanol + acetyl-CoA = ethyl acetate + CoA. The enzyme catalyses acetyl-CoA + H2O = acetate + CoA + H(+). It carries out the reaction ethyl acetate + H2O = ethanol + acetate + H(+). Functionally, alcohol acetyltransferase that catalyzes the synthesis of ethyl acetate from ethanol and acetyl-CoA. Can also function as a thioesterase by hydrolyzing acetyl-CoA in the absence of ethanol, as well as esterase hydrolyzing ethyl acetate. This is Ethanol acetyltransferase 1 (EAT1) from Cyberlindnera jadinii (strain ATCC 18201 / CBS 1600 / BCRC 20928 / JCM 3617 / NBRC 0987 / NRRL Y-1542) (Torula yeast).